Reading from the N-terminus, the 663-residue chain is General transcription and DNA repair factor IIH subunit tcf-29 (663 aa).

BSD domains follow at residues 147–206 (WFED…RAYA) and 227–278 (ENGE…LSKK). Disordered regions lie at residues 452-491 (DSDG…QHVG) and 513-535 (HLTT…EERP). Basic and acidic residues predominate over residues 453–465 (SDGRGGIDLHRSI). The span at 515 to 528 (TTTTTHGGSHTTTT) shows a compositional bias: low complexity.

The protein belongs to the TFB1 family. As to quaternary structure, component of the 7-subunit TFIIH core complex composed of XPB/rad25, XPD/dnr-10, tcf-30/SSL1, tcf-29/TFB1, tcf-11/TFB2, tcf-14/TFB4 and rtf-1/TFB5, which is active in NER. The core complex associates with the 3-subunit CTD-kinase module TFIIK composed of div-66/cyclin H, prk-3/KIN28 and rtf-2/TFB3 to form the 10-subunit holoenzyme (holo-TFIIH) active in transcription.

It localises to the nucleus. In terms of biological role, component of the general transcription and DNA repair factor IIH (TFIIH) core complex, which is involved in general and transcription-coupled nucleotide excision repair (NER) of damaged DNA and, when complexed to TFIIK, in RNA transcription by RNA polymerase II. In NER, TFIIH acts by opening DNA around the lesion to allow the excision of the damaged oligonucleotide and its replacement by a new DNA fragment. In transcription, TFIIH has an essential role in transcription initiation. When the pre-initiation complex (PIC) has been established, TFIIH is required for promoter opening and promoter escape. Phosphorylation of the C-terminal tail (CTD) of the largest subunit of RNA polymerase II by the kinase module TFIIK controls the initiation of transcription. The polypeptide is General transcription and DNA repair factor IIH subunit tcf-29 (tcf-29) (Neurospora crassa (strain ATCC 24698 / 74-OR23-1A / CBS 708.71 / DSM 1257 / FGSC 987)).